We begin with the raw amino-acid sequence, 931 residues long: Valine--tRNA ligase (931 aa).

Positions 43–53 (PNVTGALHIGH) match the 'HIGH' region motif. Residues 351–370 (IPHTDKDGNAHDAEPRTIQT) are disordered. Residues 353–365 (HTDKDGNAHDAEP) are compositionally biased toward basic and acidic residues. The short motif at 552-556 (KMSKS) is the 'KMSKS' region element. An ATP-binding site is contributed by lysine 555. The disordered stretch occupies residues 691-717 (LQGRGLGEGDEAVPAPADGPLSPALSP). Positions 864 to 930 (VIDIAAERER…DRLSAALARL (67 aa)) form a coiled coil.

The protein belongs to the class-I aminoacyl-tRNA synthetase family. ValS type 1 subfamily. As to quaternary structure, monomer.

Its subcellular location is the cytoplasm. The catalysed reaction is tRNA(Val) + L-valine + ATP = L-valyl-tRNA(Val) + AMP + diphosphate. Functionally, catalyzes the attachment of valine to tRNA(Val). As ValRS can inadvertently accommodate and process structurally similar amino acids such as threonine, to avoid such errors, it has a 'posttransfer' editing activity that hydrolyzes mischarged Thr-tRNA(Val) in a tRNA-dependent manner. This chain is Valine--tRNA ligase, found in Sphingopyxis alaskensis (strain DSM 13593 / LMG 18877 / RB2256) (Sphingomonas alaskensis).